The sequence spans 266 residues: Adaptin ear-binding coat-associated protein 2 (266 aa).

2 disordered regions span residues 164-191 (SMKK…LPPP) and 244-266 (GDFT…WVQF). Ser181 is modified (phosphoserine). Residues 243 to 246 (WGDF) carry the WXXF motif 1 motif. Low complexity predominate over residues 247–258 (TKSTGSTSSQTQ). Positions 263 to 266 (WVQF) match the WXXF motif 2 motif.

It belongs to the NECAP family. In terms of assembly, interacts with AP1G1 and AP2A1 components of the adapter protein complexes AP-1 and AP-2. Interacts with the GAE domain proteins GGA1, GGA2 and GGA3.

It is found in the cytoplasmic vesicle. It localises to the clathrin-coated vesicle membrane. The protein localises to the cell membrane. Functionally, involved in endocytosis. The chain is Adaptin ear-binding coat-associated protein 2 (NECAP2) from Bos taurus (Bovine).